The chain runs to 277 residues: Shikimate dehydrogenase (NADP(+)) (277 aa).

Shikimate is bound by residues serine 15 to serine 17 and threonine 62. The active-site Proton acceptor is lysine 66. Shikimate is bound by residues asparagine 87 and aspartate 102. Residues glycine 127–alanine 131, asparagine 151–lysine 156, and isoleucine 219 each bind NADP(+). Shikimate is bound at residue tyrosine 221. An NADP(+)-binding site is contributed by glycine 242.

It belongs to the shikimate dehydrogenase family. In terms of assembly, homodimer.

It carries out the reaction shikimate + NADP(+) = 3-dehydroshikimate + NADPH + H(+). The protein operates within metabolic intermediate biosynthesis; chorismate biosynthesis; chorismate from D-erythrose 4-phosphate and phosphoenolpyruvate: step 4/7. Its function is as follows. Involved in the biosynthesis of the chorismate, which leads to the biosynthesis of aromatic amino acids. Catalyzes the reversible NADPH linked reduction of 3-dehydroshikimate (DHSA) to yield shikimate (SA). This is Shikimate dehydrogenase (NADP(+)) from Bacillus cereus (strain ATCC 10987 / NRS 248).